A 207-amino-acid polypeptide reads, in one-letter code: 23 kDa calcium-binding protein (207 aa).

At M1 the chain carries Blocked amino end (Met). EF-hand domains follow at residues A17 to N52, V60 to K95, M119 to Q154, and P161 to K196. Positions 30, 32, 34, 36, 41, 73, 75, 77, 84, 132, 134, 136, 138, 143, 174, 176, 178, 180, and 185 each coordinate Ca(2+).

In terms of biological role, expected to play a crucial role in calcium-dependent regulation of ciliary movement. In Tetrahymena thermophila, this protein is 23 kDa calcium-binding protein.